A 310-amino-acid chain; its full sequence is MKITTKVLIIGSGPAGLSAAIYTARSSLKPILINGMQPGGQLTMTTDVENYPGFAKTIQGPWLMEQMSIQAKNVGTEIINDYVERVDLSKRPFKIFTGTGNKYEADSIIICTGAESKWLGITSEQEFRGFGVSSCAICDGFFFKNQDIVVVGGGNSALEEALYLTNHANKVTVVHRRNSFRAEKILQDRLFKNPKISVIWDHVIDEIVGSNQPKTVTGVKIKNVYTNEINLVNCSGVFIAIGHTPNTTLFNGQIAIDDDNYIITQTGSTRTSVEGVFAAGDVQDKIYRQAITAAASGCMAALEVAKFLNK.

Position 34 to 41 (34 to 41 (NGMQPGGQ)) interacts with FAD. A disulfide bridge links Cys135 with Cys138. 281 to 290 (DVQDKIYRQA) is an FAD binding site.

Belongs to the class-II pyridine nucleotide-disulfide oxidoreductase family. In terms of assembly, homodimer. FAD serves as cofactor.

Its subcellular location is the cytoplasm. The catalysed reaction is [thioredoxin]-dithiol + NADP(+) = [thioredoxin]-disulfide + NADPH + H(+). The chain is Thioredoxin reductase (trxB) from Rickettsia typhi (strain ATCC VR-144 / Wilmington).